The following is a 60-amino-acid chain: Potassium channel toxin-like Tx677 (60 aa).

A signal peptide spans 1–22 (MKISALVMITLLICSMMILCQG). 3 disulfides stabilise this stretch: cysteine 30-cysteine 51, cysteine 36-cysteine 56, and cysteine 40-cysteine 58.

It belongs to the short scorpion toxin superfamily. Potassium channel inhibitor family. Expressed by the venom gland.

The protein localises to the secreted. Weakly inhibits Kv11.1/KCNH2/ERG1, Kv1.2/KCNA2 and Kv1.3/KCNA3 voltage-gated potassium channels. This chain is Potassium channel toxin-like Tx677, found in Buthus israelis (Israeli scorpion).